A 349-amino-acid polypeptide reads, in one-letter code: MDRKETIKIKVGDKFIGGDSPITVQSMTNTDTRDVEKTVEQIKKLEEVDCDIIRCAVPDDEACQALGKITKKIAIPLVADIHFDYRLAIKAIDNGISALRINPGNIGNEEKVNLVSKKAKEKGIPIRIGVNSGSLEKDILNKYGGVCSDALVESALRHVEILNKVDFHDIVISIKSSNVNQMIESYKKISSKVNYPLHLGVTEAGTPWRGIIKSSVGIGTLLSQGIGDTIRVSLTGDPIEEIKAGKEILRALNLYSKGVEFISCPTCGRTEINLIKIAKEVEKRLDGFDKNIKVAIMGCVVNGPGEARDADIGIAGGKGYGLIFKKGEVVRKLKEEDLVEGLIEEIKNI.

Residues cysteine 264, cysteine 267, cysteine 299, and glutamate 306 each coordinate [4Fe-4S] cluster.

The protein belongs to the IspG family. [4Fe-4S] cluster is required as a cofactor.

The enzyme catalyses (2E)-4-hydroxy-3-methylbut-2-enyl diphosphate + oxidized [flavodoxin] + H2O + 2 H(+) = 2-C-methyl-D-erythritol 2,4-cyclic diphosphate + reduced [flavodoxin]. It participates in isoprenoid biosynthesis; isopentenyl diphosphate biosynthesis via DXP pathway; isopentenyl diphosphate from 1-deoxy-D-xylulose 5-phosphate: step 5/6. In terms of biological role, converts 2C-methyl-D-erythritol 2,4-cyclodiphosphate (ME-2,4cPP) into 1-hydroxy-2-methyl-2-(E)-butenyl 4-diphosphate. The sequence is that of 4-hydroxy-3-methylbut-2-en-1-yl diphosphate synthase (flavodoxin) from Clostridium tetani (strain Massachusetts / E88).